The sequence spans 198 residues: LexA repressor (198 aa).

A DNA-binding region (H-T-H motif) is located at residues Ile28 to Leu47. Active-site for autocatalytic cleavage activity residues include Ser120 and Lys157.

This sequence belongs to the peptidase S24 family. Homodimer.

The enzyme catalyses Hydrolysis of Ala-|-Gly bond in repressor LexA.. Functionally, represses a number of genes involved in the response to DNA damage (SOS response), including recA and lexA. In the presence of single-stranded DNA, RecA interacts with LexA causing an autocatalytic cleavage which disrupts the DNA-binding part of LexA, leading to derepression of the SOS regulon and eventually DNA repair. The protein is LexA repressor of Thermosipho africanus (strain TCF52B).